Here is a 309-residue protein sequence, read N- to C-terminus: Probable 2,4-dienoyl-CoA reductase 3 [(3E)-enoyl-CoA-producing] (309 aa).

Residues 32–37 (GGGTGI), Arg-57, and Asp-83 each bind NADP(+). Arg-57 is a substrate binding site. Phe-116 and Ser-124 together coordinate substrate. Tyr-166 (proton acceptor) is an active-site residue. Residues Lys-181 and 207-210 (PGPI) each bind NADP(+). Arg-218 contributes to the substrate binding site.

This sequence belongs to the short-chain dehydrogenases/reductases (SDR) family. 2,4-dienoyl-CoA reductase subfamily.

The catalysed reaction is a (2E,4E)-dienoyl-CoA + NADPH + H(+) = a 4,5-saturated-(3E)-enoyl-CoA + NADP(+). The enzyme catalyses a (2E,4Z)-dienoyl-CoA + NADPH + H(+) = a 4,5-saturated-(3E)-enoyl-CoA + NADP(+). Functionally, auxiliary enzyme of beta-oxidation. It participates in the metabolism of unsaturated fatty enoyl-CoA esters having double bonds in both even- and odd-numbered positions. Catalyzes the NADP-dependent reduction of 2,4-dienoyl-CoA to yield trans-3-enoyl-CoA. The chain is Probable 2,4-dienoyl-CoA reductase 3 [(3E)-enoyl-CoA-producing] from Caenorhabditis elegans.